Here is a 170-residue protein sequence, read N- to C-terminus: MDAKIGQFFDSVGTFFSGSDKIPWCDGDVIAGCEREVREATDSGTEDLKKECLMRLSWALVHSRQTEDVQRGIAMLEASLESSAPPLEDREKLYLLAVGYYRSGNYSRSRQLVDRCIEMQADWRQALVLKKTIEDKITKDGVIGIGITATAFGAVGLIAGGIVAAMSRKK.

The stretch at 90 to 123 (REKLYLLAVGYYRSGNYSRSRQLVDRCIEMQADW) is one TPR repeat. The helical transmembrane segment at 142–162 (VIGIGITATAFGAVGLIAGGI) threads the bilayer.

This sequence belongs to the FIS1 family. In terms of assembly, interacts with ARC5.

The protein localises to the mitochondrion outer membrane. The protein resides in the peroxisome membrane. Its function is as follows. Component of the peroxisomal and mitochondrial division machineries. Plays a role in promoting the fission of mitochondria and peroxisomes. The polypeptide is Mitochondrial fission 1 protein A (FIS1A) (Arabidopsis thaliana (Mouse-ear cress)).